We begin with the raw amino-acid sequence, 370 residues long: Dual-specificity RNA methyltransferase RlmN (370 aa).

The active-site Proton acceptor is the glutamate 93. A Radical SAM core domain is found at glutamate 99 to aspartate 337. Residues cysteine 106 and cysteine 343 are joined by a disulfide bond. Positions 113, 117, and 120 each coordinate [4Fe-4S] cluster. S-adenosyl-L-methionine contacts are provided by residues glycine 167–glutamate 168, serine 199, serine 221–histidine 223, and asparagine 300. The S-methylcysteine intermediate role is filled by cysteine 343.

It belongs to the radical SAM superfamily. RlmN family. [4Fe-4S] cluster is required as a cofactor.

The protein localises to the cytoplasm. The catalysed reaction is adenosine(2503) in 23S rRNA + 2 reduced [2Fe-2S]-[ferredoxin] + 2 S-adenosyl-L-methionine = 2-methyladenosine(2503) in 23S rRNA + 5'-deoxyadenosine + L-methionine + 2 oxidized [2Fe-2S]-[ferredoxin] + S-adenosyl-L-homocysteine. The enzyme catalyses adenosine(37) in tRNA + 2 reduced [2Fe-2S]-[ferredoxin] + 2 S-adenosyl-L-methionine = 2-methyladenosine(37) in tRNA + 5'-deoxyadenosine + L-methionine + 2 oxidized [2Fe-2S]-[ferredoxin] + S-adenosyl-L-homocysteine. In terms of biological role, specifically methylates position 2 of adenine 2503 in 23S rRNA and position 2 of adenine 37 in tRNAs. m2A2503 modification seems to play a crucial role in the proofreading step occurring at the peptidyl transferase center and thus would serve to optimize ribosomal fidelity. The sequence is that of Dual-specificity RNA methyltransferase RlmN from Francisella tularensis subsp. tularensis (strain WY96-3418).